The sequence spans 299 residues: 4-hydroxybenzoate octaprenyltransferase (299 aa).

The next 7 membrane-spanning stretches (helical) occupy residues 34-54 (IGSL…ADGL), 57-77 (LWTL…GCVI), 108-128 (LWVF…LNWL), 163-183 (WGIP…GWLL), 221-241 (FDLV…ALVD), 245-265 (DLGA…AYEF), and 277-297 (FRAF…IAVA).

The protein belongs to the UbiA prenyltransferase family. Mg(2+) is required as a cofactor.

It localises to the cell inner membrane. The catalysed reaction is all-trans-octaprenyl diphosphate + 4-hydroxybenzoate = 4-hydroxy-3-(all-trans-octaprenyl)benzoate + diphosphate. Its pathway is cofactor biosynthesis; ubiquinone biosynthesis. Catalyzes the prenylation of para-hydroxybenzoate (PHB) with an all-trans polyprenyl group. Mediates the second step in the final reaction sequence of ubiquinone-8 (UQ-8) biosynthesis, which is the condensation of the polyisoprenoid side chain with PHB, generating the first membrane-bound Q intermediate 3-octaprenyl-4-hydroxybenzoate. This Xanthomonas oryzae pv. oryzae (strain MAFF 311018) protein is 4-hydroxybenzoate octaprenyltransferase.